The sequence spans 152 residues: Ribosome maturation factor RimP (152 aa).

It belongs to the RimP family.

It is found in the cytoplasm. In terms of biological role, required for maturation of 30S ribosomal subunits. In Citrobacter koseri (strain ATCC BAA-895 / CDC 4225-83 / SGSC4696), this protein is Ribosome maturation factor RimP.